Consider the following 148-residue polypeptide: Deoxyuridine 5'-triphosphate nucleotidohydrolase (148 aa).

Substrate is bound by residues 68-70 (RSG), Asn-81, 85-87 (TID), and Lys-95.

This sequence belongs to the dUTPase family. Mg(2+) serves as cofactor.

The catalysed reaction is dUTP + H2O = dUMP + diphosphate + H(+). The protein operates within pyrimidine metabolism; dUMP biosynthesis; dUMP from dCTP (dUTP route): step 2/2. Functionally, this enzyme is involved in nucleotide metabolism: it produces dUMP, the immediate precursor of thymidine nucleotides and it decreases the intracellular concentration of dUTP so that uracil cannot be incorporated into DNA. In Rickettsia peacockii (strain Rustic), this protein is Deoxyuridine 5'-triphosphate nucleotidohydrolase.